The following is a 211-amino-acid chain: Probable endo-1,4-beta-xylanase 5 (211 aa).

A signal peptide spans 1 to 16 (MKVTAAFASLLLTAFA). One can recognise a GH11 domain in the interval 19–210 (APEPVLVSRS…GAGSASVTIS (192 aa)). E106 (nucleophile) is an active-site residue. E197 serves as the catalytic Proton donor.

The protein belongs to the glycosyl hydrolase 11 (cellulase G) family.

Its subcellular location is the secreted. The enzyme catalyses Endohydrolysis of (1-&gt;4)-beta-D-xylosidic linkages in xylans.. Its pathway is glycan degradation; xylan degradation. In terms of biological role, endo-1,4-beta-xylanase involved in the hydrolysis of xylan, a major structural heterogeneous polysaccharide found in plant biomass representing the second most abundant polysaccharide in the biosphere, after cellulose. The protein is Probable endo-1,4-beta-xylanase 5 (XYN5) of Aspergillus niger (strain ATCC MYA-4892 / CBS 513.88 / FGSC A1513).